We begin with the raw amino-acid sequence, 288 residues long: NAD(P)H-hydrate epimerase (288 aa).

Residues methionine 1–tyrosine 59 constitute a mitochondrion transit peptide. The YjeF N-terminal domain occupies alanine 65 to leucine 275. Asparagine 119 to aspartate 123 is a (6S)-NADPHX binding site. Residue asparagine 120 participates in K(+) binding. Lysine 144 carries the post-translational modification N6-succinyllysine. K(+) is bound at residue aspartate 185. Residues glycine 189–glutamate 195 and aspartate 218 contribute to the (6S)-NADPHX site. Residue serine 221 coordinates K(+).

It belongs to the NnrE/AIBP family. Homodimer. Interacts with APOA1 and APOA2. K(+) is required as a cofactor. Undergoes physiological phosphorylation during sperm capacitation, downstream to PKA activation.

The protein resides in the mitochondrion. Its subcellular location is the secreted. It carries out the reaction (6R)-NADHX = (6S)-NADHX. The catalysed reaction is (6R)-NADPHX = (6S)-NADPHX. In terms of biological role, catalyzes the epimerization of the S- and R-forms of NAD(P)HX, a damaged form of NAD(P)H that is a result of enzymatic or heat-dependent hydration. This is a prerequisite for the S-specific NAD(P)H-hydrate dehydratase to allow the repair of both epimers of NAD(P)HX. Accelerates cholesterol efflux from endothelial cells to high-density lipoprotein (HDL) and thereby regulates angiogenesis. This Sus scrofa (Pig) protein is NAD(P)H-hydrate epimerase.